Consider the following 437-residue polypeptide: GTPase Der (437 aa).

2 EngA-type G domains span residues 3-168 (PLIA…PESE) and 178-353 (VKLA…RNRS). GTP-binding positions include 9 to 16 (GRPNVGKS), 56 to 60 (DTGGY), 120 to 123 (NKVE), 184 to 191 (GRPNVGKS), 231 to 235 (DTAGL), and 296 to 299 (NKWD). Positions 354–437 (RKISTSSLNR…VPISLRFMEK (84 aa)) constitute a KH-like domain.

It belongs to the TRAFAC class TrmE-Era-EngA-EngB-Septin-like GTPase superfamily. EngA (Der) GTPase family. As to quaternary structure, associates with the 50S ribosomal subunit.

In terms of biological role, GTPase that plays an essential role in the late steps of ribosome biogenesis. This is GTPase Der from Chlorobium limicola (strain DSM 245 / NBRC 103803 / 6330).